The primary structure comprises 378 residues: Transmembrane protein adipocyte-associated 1 homolog (378 aa).

N16, N25, and N36 each carry an N-linked (GlcNAc...) asparagine glycan. 7 helical membrane-spanning segments follow: residues 61–81 (VMLL…LPSA), 88–108 (TSSP…AVGI), 136–156 (FFLL…GHLE), 164–184 (VLAI…TLEI), 205–225 (HFWL…VILP), 247–267 (ILAL…ADII), and 278–298 (FLYF…GFFG). The segment at 316–335 (DSDVHLPHTSSSGLGRKDLD) is disordered.

Belongs to the UPF0359 family.

It localises to the membrane. The protein is Transmembrane protein adipocyte-associated 1 homolog (tpra1) of Danio rerio (Zebrafish).